The primary structure comprises 525 residues: Phosphoenolpyruvate carboxykinase (ATP) (525 aa).

Substrate is bound by residues Arg-52, Tyr-186, and Lys-192. ATP-binding positions include Lys-192, His-211, and 228–236 (GLSGTGKTT). 2 residues coordinate Mn(2+): Lys-192 and His-211. Asp-249 provides a ligand contact to Mn(2+). ATP contacts are provided by residues Glu-277, Arg-314, 433–434 (RI), and Thr-439. Arg-314 is a binding site for substrate.

The protein belongs to the phosphoenolpyruvate carboxykinase (ATP) family. Mn(2+) is required as a cofactor.

It is found in the cytoplasm. It carries out the reaction oxaloacetate + ATP = phosphoenolpyruvate + ADP + CO2. It functions in the pathway carbohydrate biosynthesis; gluconeogenesis. Involved in the gluconeogenesis. Catalyzes the conversion of oxaloacetate (OAA) to phosphoenolpyruvate (PEP) through direct phosphoryl transfer between the nucleoside triphosphate and OAA. In Fusobacterium nucleatum subsp. nucleatum (strain ATCC 25586 / DSM 15643 / BCRC 10681 / CIP 101130 / JCM 8532 / KCTC 2640 / LMG 13131 / VPI 4355), this protein is Phosphoenolpyruvate carboxykinase (ATP).